We begin with the raw amino-acid sequence, 587 residues long: MKDIYNQILKLQLQIKYHNYMYHTLDSPIISDILYDELYNKLLQLEKLYFKKKSLDKKIKLLDQVGAKKLHIFTEFFHKIPMLSLRSINNISDFDLFDKKIKEYFKHINVITYFCDFKFDGLAVNLFYKNGILISASTRGNGSVGENITKNILMISSIPKKIAGSNIPKKIEIRGEIFMRKSDFFILNQSCKLSGKKEFSNPRNAAAGSVRQLNPEIVKKRKLNFFVYGFGLFDYNKKIDSHYQRLLQIKKWGFPLYKNYCVCKNKKEVIHFYHYANKIRSQLDFEIDGIVIKLDSIKLQNNLGCIEKYPKWAIALKFFSLDKETKIFKISFKVGRTGIITPVAYFFPINLFGVSISKASLYNIKTIKLLDIRLHDYVTVYRAGDVIPKIRNVLIHKRNKYTQKIIIPTYCPSCCTKLIFSDDLKTCYCPASFSCFSQNVKRLIYFSSKNGLNFKGLGKKNIIKLINYGYLYTPIDFFSLTVKKLKNIFRMGDKLSEKIIKNIAFSKRVSLDKFICSLGIFGVGTSIAKRLAYYYRSVEKFFNTNYDTLSKIDHIGYNISNAIISFLKNKSNRSIILKLIRILNIFI.

NAD(+) is bound by residues 32-36, 84-85, and D116; these read DILYD and SL. Residue K118 is the N6-AMP-lysine intermediate of the active site. Residues R139, E176, K293, and K317 each coordinate NAD(+). Zn(2+) is bound by residues C411, C414, C429, and C435.

It belongs to the NAD-dependent DNA ligase family. LigA subfamily. The cofactor is Mg(2+). Mn(2+) serves as cofactor.

It catalyses the reaction NAD(+) + (deoxyribonucleotide)n-3'-hydroxyl + 5'-phospho-(deoxyribonucleotide)m = (deoxyribonucleotide)n+m + AMP + beta-nicotinamide D-nucleotide.. DNA ligase that catalyzes the formation of phosphodiester linkages between 5'-phosphoryl and 3'-hydroxyl groups in double-stranded DNA using NAD as a coenzyme and as the energy source for the reaction. It is essential for DNA replication and repair of damaged DNA. The polypeptide is DNA ligase (Buchnera aphidicola subsp. Cinara cedri (strain Cc)).